Here is a 286-residue protein sequence, read N- to C-terminus: UPF0725 protein At2g20620 (286 aa).

Positions 1-49 (MVLETPVCSPIDKESSSDDVQLNKPPKKKRKLDVVYPPRDNTSSSSDVK) are disordered.

It belongs to the UPF0725 (EMB2204) family.

In Arabidopsis thaliana (Mouse-ear cress), this protein is UPF0725 protein At2g20620.